A 550-amino-acid polypeptide reads, in one-letter code: Protein UshA (550 aa).

A signal peptide spans Met-1–Ala-25. Asp-41, His-43, Asp-84, Asn-116, His-217, His-252, and Gln-254 together coordinate Zn(2+). A disulfide bond links Cys-258 and Cys-275. Substrate contacts are provided by residues Arg-375–Arg-379 and Phe-498–Asp-504.

It belongs to the 5'-nucleotidase family. As to quaternary structure, monomer. Zn(2+) serves as cofactor.

The protein localises to the periplasm. It catalyses the reaction UDP-sugar + H2O = UMP + alpha-D-aldose 1-phosphate.. It carries out the reaction a ribonucleoside 5'-phosphate + H2O = a ribonucleoside + phosphate. With respect to regulation, the activity of this protein is inhibited by an intracellular protein inhibitor. Functionally, degradation of external UDP-glucose to uridine monophosphate and glucose-1-phosphate, which can then be used by the cell. This Escherichia coli (strain K12) protein is Protein UshA (ushA).